A 295-amino-acid chain; its full sequence is Non-selective voltage-gated ion channel VDAC2 (295 aa).

The ATP site is built by Lys-24 and Lys-32. Lys-32 carries the post-translational modification N6-acetyllysine; alternate. Lys-32 carries the N6-succinyllysine; alternate modification. A Glycyl lysine isopeptide (Lys-Gly) (interchain with G-Cter in ubiquitin); alternate cross-link involves residue Lys-32. The next 2 beta stranded transmembrane spans lie at 38–47 and 51–59; these read LVKLDVKTKS and VEFSTSGSS. Glycyl lysine isopeptide (Lys-Gly) (interchain with G-Cter in ubiquitin) cross-links involve residues Lys-65 and Lys-73. The next 4 beta stranded transmembrane spans lie at 66-76, 81-88, 92-101, and 107-116; these read VSGTLETKYKW, LTFTEKWN, TLGTEIAIED, and LKLTFDTTFS. An N6-acetyllysine; alternate modification is found at Lys-121. Lys-121 participates in a covalent cross-link: Glycyl lysine isopeptide (Lys-Gly) (interchain with G-Cter in ubiquitin); alternate. Residues Lys-122 and Lys-125 each participate in a glycyl lysine isopeptide (Lys-Gly) (interchain with G-Cter in ubiquitin) cross-link. 4 beta stranded membrane-spanning segments follow: residues 123 to 132, 135 to 142, 149 to 157, and 162 to 170; these read SGKIKSAYKR, INLGCDVD, AIHGSAVFG, and LAGYQMTFD. Lys-173 is covalently cross-linked (Glycyl lysine isopeptide (Lys-Gly) (interchain with G-Cter in ubiquitin)). 6 consecutive transmembrane segments (beta stranded) span residues 175–187, 190–197, 201–210, 214–223, 230–239, and 243–250; these read KLTR…GYRT, FQLHTNVN, EFGGSIYQKV, FDTSVNLAWT, RFGIAAKYQL, and ASISAKVN. Position 205 is a phosphoserine (Ser-205). The residue at position 252 (Ser-252) is a Phosphoserine. Residues 254–256 and 272–276 contribute to the NAD(+) site; these read LIG and SALVD. The next 2 membrane-spanning stretches (beta stranded) occupy residues 254 to 263 and 266 to 275; these read LIGVGYTQTL and GVKLTLSALV. Lys-278 carries the N6-acetyllysine; alternate modification. Lys-278 participates in a covalent cross-link: Glycyl lysine isopeptide (Lys-Gly) (interchain with G-Cter in ubiquitin); alternate. A beta stranded membrane pass occupies residues 285–294; that stretch reads HKLGLALELE. Residue Lys-286 forms a Glycyl lysine isopeptide (Lys-Gly) (interchain with G-Cter in ubiquitin) linkage.

The protein belongs to the eukaryotic mitochondrial porin family. As to quaternary structure, monomer, homodimer and higher order oligomers; formation of higher order structures is necessary for scramblase activity. Interacts with ARMC12 in a TBC1D21-dependent manner. Interacts with KLC3. Interacts with SPATA33. Interacts with PPP3CC in a SPATA33-dependent manner. Ubiquitinated by PRKN during mitophagy, leading to its degradation and enhancement of mitophagy. Deubiquitinated by USP30.

Its subcellular location is the mitochondrion outer membrane. It localises to the membrane. It carries out the reaction chloride(in) = chloride(out). The catalysed reaction is K(+)(in) = K(+)(out). The enzyme catalyses a 1,2-diacyl-sn-glycero-3-phospho-L-serine(in) = a 1,2-diacyl-sn-glycero-3-phospho-L-serine(out). It catalyses the reaction a 1,2-diacyl-sn-glycero-3-phosphocholine(in) = a 1,2-diacyl-sn-glycero-3-phosphocholine(out). It carries out the reaction a 1,2-diacyl-sn-glycero-3-phospho-(1D-myo-inositol)(in) = a 1,2-diacyl-sn-glycero-3-phospho-(1D-myo-inositol)(out). Its function is as follows. Non-selective voltage-gated ion channel that mediates the transport of anions and cations through the mitochondrion outer membrane and plasma membrane. The channel adopts an open conformation at zero mV and a closed conformation at both positive and negative potentials. There are two populations of channels; the main that functions in a lower open-state conductance with lower ion selectivity, that switch, in a voltage-dependent manner, from the open to a low-conducting 'closed' state and the other that has a normal ion selectivity in the typical high conductance, 'open' state. Binds various lipids, including the sphingolipid ceramide, the phospholipid phosphatidylcholine, and the sterols cholesterol and oxysterol. Binding of ceramide promotes the mitochondrial outer membrane permeabilization (MOMP) apoptotic pathway. Catalyzes the scrambling of phospholipids across the outer mitochondrial membrane; the mechanism is unrelated to channel activity and is capable of translocating both anionic and zwitterionic phospholipids. This chain is Non-selective voltage-gated ion channel VDAC2, found in Mesocricetus auratus (Golden hamster).